Reading from the N-terminus, the 447-residue chain is Serine/threonine-protein phosphatase 2A 55 kDa regulatory subunit B gamma isoform (447 aa).

WD repeat units follow at residues Thr-22–Pro-61, Glu-87–Glu-128, Gly-171–Asn-209, Asp-220–Lys-260, Glu-279–Glu-317, Glu-334–Leu-375, and Asp-410–Val-446.

This sequence belongs to the phosphatase 2A regulatory subunit B family. PP2A consists of a common heterodimeric core enzyme, composed of a 36 kDa catalytic subunit (subunit C) and a 65 kDa constant regulatory subunit (PR65 or subunit A), that associates with a variety of regulatory subunits. Proteins that associate with the core dimer include three families of regulatory subunits B (the R2/B/PR55/B55, R3/B''/PR72/PR130/PR59 and R5/B'/B56 families), the 48 kDa variable regulatory subunit, viral proteins, and cell signaling molecules. Interacts with IER5. In terms of tissue distribution, highly expressed in brain.

Its function is as follows. The B regulatory subunit might modulate substrate selectivity and catalytic activity, and might also direct the localization of the catalytic enzyme to a particular subcellular compartment. The protein is Serine/threonine-protein phosphatase 2A 55 kDa regulatory subunit B gamma isoform (PPP2R2C) of Oryctolagus cuniculus (Rabbit).